Here is a 602-residue protein sequence, read N- to C-terminus: Alpha-glucosides permease MPH3 (602 aa).

Residues 1 to 106 (MKNLSFLINR…AAAWSLLVST (106 aa)) are Cytoplasmic-facing. A helical transmembrane segment spans residues 107–127 (TLIMEGYDTAILGAFYALPIF). Topologically, residues 128 to 142 (QRKFGSQNDKTGEWE) are extracellular. The helical transmembrane segment at 143–163 (ISASWQIGLTLCYMAGEIVGL) threads the bilayer. Topologically, residues 164-178 (QLTGPSVDLVGNRYT) are cytoplasmic. The chain crosses the membrane as a helical span at residues 179 to 199 (LIIALFFLAAFTFILYFCNSL). Gly200 is a topological domain (extracellular). The helical transmembrane segment at 201–221 (MIAVGQALCGMPWGCFQCLTV) threads the bilayer. Topologically, residues 222–234 (SYASEICPLALRY) are cytoplasmic. The chain crosses the membrane as a helical span at residues 235–255 (YLTTYSNLCWLFGQLFAAGIM). Residues 256-270 (KNSQKKYADSELGYK) lie on the Extracellular side of the membrane. Residues 271 to 291 (LPFALQWILPVPLALGIFFAP) form a helical membrane-spanning segment. Over 292-363 (ESPWWLVKKG…EDKINRRRTR (72 aa)) the chain is Cytoplasmic. Residues 364 to 384 (ITCLCWAGQATCGSILIGYST) form a helical membrane-spanning segment. At 385-397 (YFYEKAGVSTEMS) the chain is on the extracellular side. A helical transmembrane segment spans residues 398-418 (FTFSIIQYCLGICATFLSWWA). Residues 419 to 426 (SKYFGRYD) are Cytoplasmic-facing. The chain crosses the membrane as a helical span at residues 427 to 447 (LYAFGLAFQTIVFFIIGGLGC). Residues 448–459 (SSTHGSKMGSGS) lie on the Extracellular side of the membrane. The chain crosses the membrane as a helical span at residues 460–480 (LLMAVAFFYNLGIAPVVFCLV). Residues 481-492 (SEMPSSRLRTKT) lie on the Cytoplasmic side of the membrane. A helical transmembrane segment spans residues 493 to 513 (IILARNTYNVVSIICSVLILY). The Extracellular portion of the chain corresponds to 514-525 (QLNSKKWNWGAK). A helical membrane pass occupies residues 526-546 (SGFFWGVLCFCTLIWAVVDLP). The Cytoplasmic segment spans residues 547–602 (ETAGKTFVEINELFKLGVSARKFKSTKVDPFVVKTPPKDVSHNDPKGDIEASIAEE). Residues 582 to 595 (PPKDVSHNDPKGDI) are compositionally biased toward basic and acidic residues. The interval 582-602 (PPKDVSHNDPKGDIEASIAEE) is disordered.

Belongs to the major facilitator superfamily. Sugar transporter (TC 2.A.1.1) family.

The protein resides in the cell membrane. Its function is as follows. High-affinity uptake of maltose and maltotriose. Also transports alpha-methylglucoside, glucose and turanose but not melezitose or trehalose. The protein is Alpha-glucosides permease MPH3 (MPH3) of Saccharomyces cerevisiae (strain ATCC 204508 / S288c) (Baker's yeast).